The following is a 93-amino-acid chain: RNA silencing suppressor (93 aa).

The segment at 44–47 (CKRR) is basic. The C4-type zinc-finger motif lies at 54–69 (CWRCYRVYPPVCNSKC).

Belongs to the carlaviruses nucleic acid-binding protein family.

In terms of biological role, suppressor of viral-induced RNA silencing. The potential mechanism of action is based on sequestering siRNAs. The sequence is that of RNA silencing suppressor from Solanum tuberosum (Potato).